Consider the following 185-residue polypeptide: dTDP-4-dehydrorhamnose 3,5-epimerase (185 aa).

Residues Arg23, Glu28, 47 to 49, and Arg59 each bind substrate; that span reads QDN. The Proton acceptor role is filled by His62. Residues Lys72 and His119 each contribute to the substrate site. Tyr132 serves as the catalytic Proton donor. Substrate contacts are provided by Asp143 and Lys168.

The protein belongs to the dTDP-4-dehydrorhamnose 3,5-epimerase family. As to quaternary structure, homodimer.

The catalysed reaction is dTDP-4-dehydro-6-deoxy-alpha-D-glucose = dTDP-4-dehydro-beta-L-rhamnose. The protein operates within carbohydrate biosynthesis; dTDP-L-rhamnose biosynthesis. It participates in bacterial outer membrane biogenesis; LPS O-antigen biosynthesis. Functionally, catalyzes the epimerization of the C3' and C5'positions of dTDP-6-deoxy-D-xylo-4-hexulose, forming dTDP-6-deoxy-L-lyxo-4-hexulose. This Escherichia coli (strain K12) protein is dTDP-4-dehydrorhamnose 3,5-epimerase (rfbC).